The following is a 323-amino-acid chain: rRNA 2'-O-methyltransferase fibrillarin (323 aa).

The disordered stretch occupies residues 1–80 (MGFERGGRGG…AKGGAAGKKV (80 aa)). An asymmetric dimethylarginine mark is found at Arg5, Arg8, Arg12, Arg16, Arg23, Arg26, Arg30, Arg34, Arg41, Arg47, Arg49, Arg53, Arg57, Arg62, Arg64, and Arg68. Over residues 8–76 (RGGARGGGRG…ARGGAKGGAA (69 aa)) the composition is skewed to gly residues. S-adenosyl-L-methionine contacts are provided by residues 174 to 175 (TS), 193 to 194 (EF), 218 to 219 (DA), and 238 to 241 (DVAQ).

Belongs to the methyltransferase superfamily. Fibrillarin family. Component of box C/D small nucleolar ribonucleoprotein (snoRNP) particles. Post-translationally, by homology to other fibrillarins, some or all of the N-terminal domain arginines are modified to asymmetric dimethylarginine (DMA).

The protein resides in the nucleus. It is found in the nucleolus. It catalyses the reaction L-glutaminyl-[histone H2A] + S-adenosyl-L-methionine = N(5)-methyl-L-glutaminyl-[histone H2A] + S-adenosyl-L-homocysteine + H(+). Its function is as follows. S-adenosyl-L-methionine-dependent methyltransferase that has the ability to methylate both RNAs and proteins. Involved in pre-rRNA processing. Utilizes the methyl donor S-adenosyl-L-methionine to catalyze the site-specific 2'-hydroxyl methylation of ribose moieties in pre-ribosomal RNA. Site specificity is provided by a guide RNA that base pairs with the substrate. Methylation occurs at a characteristic distance from the sequence involved in base pairing with the guide RNA. Also acts as a protein methyltransferase by mediating methylation of 'Gln-105' of histone H2A (H2AQ105me), a modification that impairs binding of the FACT complex and is specifically present at 35S ribosomal DNA locus. In Neurospora crassa (strain ATCC 24698 / 74-OR23-1A / CBS 708.71 / DSM 1257 / FGSC 987), this protein is rRNA 2'-O-methyltransferase fibrillarin (nop-1).